A 486-amino-acid polypeptide reads, in one-letter code: Recombining binding protein suppressor of hairless (486 aa).

DNA-binding regions lie at residues 43-53 (QKSYGNEKRFF) and 151-156 (SKPSKK). Lysine 161 bears the N6-acetyllysine mark. The segment at 178-183 (RLRSQT) is DNA-binding. One can recognise an IPT/TIG domain in the interval 341–431 (PVVESLQLNG…YSTSLTFTYT (91 aa)). Residues 451-467 (SSQVPPNESNTNSEGSY) show a composition bias toward polar residues. Positions 451-486 (SSQVPPNESNTNSEGSYTNASTNSTSVTSSTATVVS) are disordered. A compositionally biased stretch (low complexity) spans 468–486 (TNASTNSTSVTSSTATVVS).

This sequence belongs to the Su(H) family. Interacts with activated NOTCH1, NOTCH2 or NOTCH3. Interacts with MINT/SHARP. This interaction may mediate the recruitment of large corepressor complexes containing proteins such as HDAC1, HDAC2, NCOR2, SAP30, FHL1/KYOT2 and CIR1. Interacts with EP300, MAML1 and PTF1A. Interacts with RITA1, leading to nuclear export, prevent the interaction between RBPJ and NICD product and subsequent down-regulation of the Notch signaling pathway. Interacts with SNW1. Interacts with CHCHD2 and CXXC5. Interacts with BEND6 (via BEN domain). Interacts with NKAPL. Interacts with ZMIZ1. Interacts with RBM15. Interacts with L3MBTL3 and KDM1A; the interaction with KDM1A is weaker in the absence of L3MBTL3 and the interaction with L3MBTL3 is impaired by Notch-derived peptides containing the intracellular domain (NICD).

The protein localises to the nucleus. Its subcellular location is the cytoplasm. In terms of biological role, transcriptional regulator that plays a central role in Notch signaling, a signaling pathway involved in cell-cell communication that regulates a broad spectrum of cell-fate determinations. Acts as a transcriptional repressor when it is not associated with Notch proteins. When associated with some NICD product of Notch proteins (Notch intracellular domain), it acts as a transcriptional activator that activates transcription of Notch target genes. Probably represses or activates transcription via the recruitment of chromatin remodeling complexes containing histone deacetylase or histone acetylase proteins, respectively. Specifically binds to the immunoglobulin kappa-type J segment recombination signal sequence. Binds specifically to methylated DNA. Binds to the oxygen responsive element of COX4I2 and activates its transcription under hypoxia conditions (4% oxygen). Negatively regulates the phagocyte oxidative burst in response to bacterial infection by repressing transcription of NADPH oxidase subunits. This Pongo abelii (Sumatran orangutan) protein is Recombining binding protein suppressor of hairless (RBPJ).